Reading from the N-terminus, the 447-residue chain is Ameloblastin (447 aa).

The N-terminal stretch at 1-26 (MSASKIPLFKMKDLILILCLLEMSFA) is a signal peptide. P37 is modified (hydroxyproline). S43 bears the Phosphoserine mark. S112 is a glycosylation site (O-linked (GalNAc...) serine). Disordered regions lie at residues 165-211 (QQVA…DFAD), 307-338 (DSPVAATKGPENEEGGAQGSPMPEANPDNLEN), and 353-383 (LLALPKDDIPGLPRSPSGKMKGLPSVTPAAA). Tandem repeats lie at residues 189-201 (PSLPGMDFPDPQG) and 202-214 (PSLPGLDFADPQG).

The protein belongs to the ameloblastin family. In terms of tissue distribution, ameloblast-specific. Located at the Tomes processes of secretory ameloblasts and in the sheath space between rod-interrod enamel.

It localises to the secreted. The protein localises to the extracellular space. It is found in the extracellular matrix. Its function is as follows. Involved in the mineralization and structural organization of enamel. This chain is Ameloblastin (AMBN), found in Homo sapiens (Human).